The primary structure comprises 387 residues: 3-ketoacyl-CoA thiolase (387 aa).

Cysteine 91 serves as the catalytic Acyl-thioester intermediate. Catalysis depends on proton acceptor residues histidine 343 and cysteine 373.

It belongs to the thiolase-like superfamily. Thiolase family. Heterotetramer of two alpha chains (FadB) and two beta chains (FadA).

The protein resides in the cytoplasm. It carries out the reaction an acyl-CoA + acetyl-CoA = a 3-oxoacyl-CoA + CoA. Its pathway is lipid metabolism; fatty acid beta-oxidation. In terms of biological role, catalyzes the final step of fatty acid oxidation in which acetyl-CoA is released and the CoA ester of a fatty acid two carbons shorter is formed. Involved in the aerobic and anaerobic degradation of long-chain fatty acids. This chain is 3-ketoacyl-CoA thiolase, found in Escherichia coli O6:H1 (strain CFT073 / ATCC 700928 / UPEC).